The sequence spans 283 residues: Protein boule-like (283 aa).

The tract at residues Met1–Pro25 is disordered. One can recognise an RRM domain in the interval Asn33–Arg110. One can recognise a DAZ domain in the interval Pro160–Gln184.

Belongs to the RRM DAZ family. As to quaternary structure, interacts with DAZ1 and DAZL. As to expression, testis specific. Not expressed in early embryos, primordial germ cells and spermatogonial cells. First expressed in the cytoplasm of spermatocytes and then persists through meiosis.

It localises to the cytoplasm. In terms of biological role, probable RNA-binding protein, which may be required during spermatogenesis. May act by binding to the 3'-UTR of mRNAs and regulating their translation. The protein is Protein boule-like (BOLL) of Homo sapiens (Human).